Consider the following 371-residue polypeptide: Glutamate 5-kinase (371 aa).

Residue Lys-14 coordinates ATP. Substrate-binding residues include Ser-54, Asp-141, and Asn-153. 173 to 174 contributes to the ATP binding site; sequence TD. The PUA domain occupies 280–357; the sequence is AGDLILDDGA…TQIEKLLGYI (78 aa).

The protein belongs to the glutamate 5-kinase family.

It is found in the cytoplasm. It carries out the reaction L-glutamate + ATP = L-glutamyl 5-phosphate + ADP. The protein operates within amino-acid biosynthesis; L-proline biosynthesis; L-glutamate 5-semialdehyde from L-glutamate: step 1/2. Catalyzes the transfer of a phosphate group to glutamate to form L-glutamate 5-phosphate. The polypeptide is Glutamate 5-kinase (Aromatoleum aromaticum (strain DSM 19018 / LMG 30748 / EbN1) (Azoarcus sp. (strain EbN1))).